Reading from the N-terminus, the 689-residue chain is MPREFSLENTRNLGIMAHIDAGKTTTTERILFHTGKIHKIGETHEGASQMDWMAQEQERGITITSAATTAFWKNNRFNIIDTPGHVDFTVEVERSLRVLDGAVAVLDGQSGVEPQTETVWRQATTYRVPRIVFVNKMDKTGADFIYSVKSIGDRLGAKAAPIQLPIGAEDNFTGIIDLVEMKAYEFDGKAEEIAKEIEIPADLKDQAEILRSELVEAAVEYDEELMMKFLDGEEITIPELKQAIRKGVIGAEFFPVLAGSAFKNKGVKLLLDAVVDYLPSPLDVPSIKGVLPNGEEAERHADDNEPFSALAFKVMTDPFVGKLTFFRVYSGILTKGSYVLNSTKGDKERVGRILQMHANNRNEIEEVYAGDIAAAVGLKNTTTGDTLVDEKHEIILESMVFPEPVIQLALEPKTKADQEKMGLALSKLAEEDPTFRTYTDEETGQTIIAGMGELHLDIIVDRMRREFKVETNVGAPQVSYRETIKLPAKAEGKYVKQSGGRGSYGHVVIEFEPNVDKGFEWVDKITGGRVSKEYINAARVGLENALTNGVVAGYPMIDVKATIVDGSMHDVDSNEMAYKIAASFALKEACKKMNPVILEPIMNVEVTVPDEYYGDVMGNISSKRGLIEGSEQRGNAQTIKSKVPLTEMFGYATELRSFTQGRGNYTMIFSHYAEAPRSIAEEIIKKSGK.

The tr-type G domain occupies Glu8–Leu282. GTP is bound by residues Ala17–Thr24, Asp81–His85, and Asn135–Asp138.

This sequence belongs to the TRAFAC class translation factor GTPase superfamily. Classic translation factor GTPase family. EF-G/EF-2 subfamily.

It localises to the cytoplasm. Functionally, catalyzes the GTP-dependent ribosomal translocation step during translation elongation. During this step, the ribosome changes from the pre-translocational (PRE) to the post-translocational (POST) state as the newly formed A-site-bound peptidyl-tRNA and P-site-bound deacylated tRNA move to the P and E sites, respectively. Catalyzes the coordinated movement of the two tRNA molecules, the mRNA and conformational changes in the ribosome. This is Elongation factor G from Mesoplasma florum (strain ATCC 33453 / NBRC 100688 / NCTC 11704 / L1) (Acholeplasma florum).